The sequence spans 104 residues: Urease subunit gamma (104 aa).

Belongs to the urease gamma subunit family. In terms of assembly, heterotrimer of UreA (gamma), UreB (beta) and UreC (alpha) subunits. Three heterotrimers associate to form the active enzyme.

The protein resides in the cytoplasm. The enzyme catalyses urea + 2 H2O + H(+) = hydrogencarbonate + 2 NH4(+). Its pathway is nitrogen metabolism; urea degradation; CO(2) and NH(3) from urea (urease route): step 1/1. The chain is Urease subunit gamma from Actinomyces naeslundii.